The primary structure comprises 187 residues: 1,6-anhydro-N-acetylmuramyl-L-alanine amidase AmpD (187 aa).

An N-acetylmuramoyl-L-alanine amidase domain is found at Ser29–Pro167. His34 contributes to the Zn(2+) binding site. The active-site Proton acceptor is Glu116. Zn(2+) contacts are provided by His154 and Asp164.

Belongs to the N-acetylmuramoyl-L-alanine amidase 2 family. Requires Zn(2+) as cofactor.

It is found in the cytoplasm. It catalyses the reaction Hydrolyzes the link between N-acetylmuramoyl residues and L-amino acid residues in certain cell-wall glycopeptides.. Involved in cell wall peptidoglycan recycling. Specifically cleaves the amide bond between the lactyl group of N-acetylmuramic acid and the alpha-amino group of the L-alanine in degradation products containing an anhydro N-acetylmuramyl moiety. The sequence is that of 1,6-anhydro-N-acetylmuramyl-L-alanine amidase AmpD (ampD) from Salmonella typhimurium (strain SL1344).